We begin with the raw amino-acid sequence, 270 residues long: UPF0354 protein BCA_4815 (270 aa).

This sequence belongs to the UPF0354 family.

The chain is UPF0354 protein BCA_4815 from Bacillus cereus (strain 03BB102).